The following is an 830-amino-acid chain: Phenylalanine--tRNA ligase beta subunit (830 aa).

The 120-residue stretch at 39 to 158 folds into the tRNA-binding domain; sequence GQSLDGVVVG…DDTPVGTPFP (120 aa). The region spanning 417 to 492 is the B5 domain; sequence PAEKTIALRP…RLHGYDQIPE (76 aa). 4 residues coordinate Mg(2+): aspartate 470, aspartate 476, glutamate 479, and glutamate 480. The disordered stretch occupies residues 490–510; the sequence is IPEPERVPVPSRTPEQPPEET. The region spanning 736–828 is the FDX-ACB domain; that stretch reads SRFPVVDRDL…LAENHGARLR (93 aa).

Belongs to the phenylalanyl-tRNA synthetase beta subunit family. Type 1 subfamily. As to quaternary structure, tetramer of two alpha and two beta subunits. Mg(2+) is required as a cofactor.

It localises to the cytoplasm. It carries out the reaction tRNA(Phe) + L-phenylalanine + ATP = L-phenylalanyl-tRNA(Phe) + AMP + diphosphate + H(+). This is Phenylalanine--tRNA ligase beta subunit from Salinibacter ruber (strain DSM 13855 / M31).